The sequence spans 555 residues: Zinc transporter ZIP5 (555 aa).

Residues 1–242 (MGGQTVWMTL…HSQASKTSEG (242 aa)) lie on the Extracellular side of the membrane. The disordered stretch occupies residues 108-148 (KHPSQSISHSHSHEDHHPSQGTTNSPPLRESLDAKSALSGS). The chain crosses the membrane as a helical span at residues 243 to 263 (FLIALGWASLALLVISLPSLV). The Cytoplasmic segment spans residues 264–314 (ALGMAPLLQPSVLQVFLCPMAGMAVGTLCGDALLHLMPHAIFSQHTDHQNA). The chain crosses the membrane as a helical span at residues 315-335 (VFKGLSVLGGLYLLFIFESLL). Topologically, residues 336-408 (GLKQHFKNLK…DGIHNLTDGL (73 aa)) are extracellular. Over residues 363 to 374 (TSSANQNESSGH) the composition is skewed to polar residues. Residues 363 to 383 (TSSANQNESSGHGHSHGQAEP) are disordered. A helical membrane pass occupies residues 409–429 (AIGVAFSQSLTGGFSTAIAVF). Residues 430–452 (CHELPHELGDLAVLLSAGWPVRR) lie on the Cytoplasmic side of the membrane. Residues 453–473 (LLVFSGLSALLGFVGVLAGSA) form a helical membrane-spanning segment. The Extracellular portion of the chain corresponds to 474–482 (LGNHWASHS). A helical transmembrane segment spans residues 483 to 503 (PWILTLTAGVFLYVALADMMP). Topologically, residues 504 to 518 (EMLHGACGSVSPLKR) are cytoplasmic. Residues 519 to 539 (FLLQALGLLTGGAIMLCIALF) traverse the membrane as a helical segment. Over 540-555 (EDHIAVSLGENSLGEN) the chain is Extracellular.

This sequence belongs to the ZIP transporter (TC 2.A.5) family.

The protein resides in the basolateral cell membrane. The enzyme catalyses Zn(2+)(in) = Zn(2+)(out). Functionally, uniporter that transports zinc(2+) into polarized cells of enterocytes, pancreatic acinar and endoderm cells across the basolateral membrane and participates, notably, in zinc excretion from the intestine by the uptake of zinc from the blood into the intestine. The transport mechanism is temperature- and concentration-dependent and saturable. Mediates zinc homeostasis that is essential for venous angiogenesis. The protein is Zinc transporter ZIP5 (slc39a5) of Danio rerio (Zebrafish).